Here is a 176-residue protein sequence, read N- to C-terminus: Late lactation protein A (176 aa).

A signal peptide spans 1–18 (MRVLFLTISLSLFSIIHA). Residues cysteine 78 and cysteine 171 are joined by a disulfide bond.

This sequence belongs to the calycin superfamily. Lipocalin family. Mammary gland specific. Secreted in milk.

The protein localises to the secreted. Probably serves a role in the transport of a small ligand released during the hydrolysis of milk fat. This Notamacropus eugenii (Tammar wallaby) protein is Late lactation protein A (LLPA).